Consider the following 390-residue polypeptide: Chorismate synthase (390 aa).

NADP(+) contacts are provided by Arg-39 and Arg-45. Residues 132-134 (RSS), 253-254 (NA), Gly-298, 313-317 (KPIPT), and Arg-339 contribute to the FMN site.

This sequence belongs to the chorismate synthase family. As to quaternary structure, homotetramer. The cofactor is FMNH2.

It carries out the reaction 5-O-(1-carboxyvinyl)-3-phosphoshikimate = chorismate + phosphate. The protein operates within metabolic intermediate biosynthesis; chorismate biosynthesis; chorismate from D-erythrose 4-phosphate and phosphoenolpyruvate: step 7/7. Functionally, catalyzes the anti-1,4-elimination of the C-3 phosphate and the C-6 proR hydrogen from 5-enolpyruvylshikimate-3-phosphate (EPSP) to yield chorismate, which is the branch point compound that serves as the starting substrate for the three terminal pathways of aromatic amino acid biosynthesis. This reaction introduces a second double bond into the aromatic ring system. This Bacillus velezensis (strain DSM 23117 / BGSC 10A6 / LMG 26770 / FZB42) (Bacillus amyloliquefaciens subsp. plantarum) protein is Chorismate synthase.